An 840-amino-acid chain; its full sequence is Translation initiation factor IF-2 (840 aa).

2 disordered regions span residues 94-157 and 169-256; these read KRSP…AGAE and PVAK…PTGP. Basic and acidic residues predominate over residues 95 to 143; sequence RSPDEIEAERQRELEEQRAAEEAERLKAEEAAARQRAEEEARKAEEAAR. The segment covering 144–157 has biased composition (low complexity); it reads AKAAQEAAATAGAE. Composition is skewed to basic and acidic residues over residues 175-191 and 223-232; these read AVEE…PKRD and STDEESDGYR. Basic residues predominate over residues 233–247; sequence RGGRGGKSKLKKRNQ. A tr-type G domain is found at 340–509; sequence TRAPVVTVMG…LLQAEVLELK (170 aa). Residues 349-356 are G1; the sequence is GHVDHGKT. 349–356 is a binding site for GTP; sequence GHVDHGKT. The interval 374–378 is G2; it reads GITQH. A G3 region spans residues 395-398; sequence DTPG. Residues 395–399 and 449–452 each bind GTP; these read DTPGH and NKID. The tract at residues 449-452 is G4; sequence NKID. The G5 stretch occupies residues 485 to 487; the sequence is SAK.

The protein belongs to the TRAFAC class translation factor GTPase superfamily. Classic translation factor GTPase family. IF-2 subfamily.

The protein localises to the cytoplasm. One of the essential components for the initiation of protein synthesis. Protects formylmethionyl-tRNA from spontaneous hydrolysis and promotes its binding to the 30S ribosomal subunits. Also involved in the hydrolysis of GTP during the formation of the 70S ribosomal complex. This is Translation initiation factor IF-2 from Pseudomonas aeruginosa (strain UCBPP-PA14).